The following is a 299-amino-acid chain: Pentalenolactone F synthase (299 aa).

2 residues coordinate Fe cation: H105 and D107. 2-oxoglutarate is bound by residues T133 and W251. H266 contacts Fe cation. 2-oxoglutarate is bound at residue R277.

Belongs to the TfdA dioxygenase family. Requires Fe(2+) as cofactor.

The enzyme catalyses pentalenolactone D + 2 2-oxoglutarate + 2 O2 = pentalenolactone F + 2 succinate + 2 CO2 + H2O. It participates in antibiotic biosynthesis; pentalenolactone biosynthesis. With respect to regulation, activated by ascorbate. Functionally, catalyzes the Fe(2+) and alpha-ketoglutarate-dependent oxidation of pentalenolactone D to pentalenolactone F in the biosynthesis of pentalenolactone antibiotic. Also able to catalyze the oxidation of pentalenolactone D to pentalenolactone E. The sequence is that of Pentalenolactone F synthase (pntD) from Streptomyces arenae.